Here is an 845-residue protein sequence, read N- to C-terminus: Nuclear pore complex protein Nup107 (845 aa).

2 disordered regions span residues 1-26 (MADS…MPPQ) and 677-702 (QNRP…MASE). 2 stretches are compositionally biased toward polar residues: residues 7 to 26 (PRSS…MPPQ) and 685 to 694 (TSHAASSQDN).

Belongs to the nucleoporin Nup84/Nup107 family. Part of the nuclear pore complex (NPC). Expressed in spermatocytes (at protein level).

It localises to the nucleus. Its subcellular location is the nuclear pore complex. It is found in the nucleus envelope. The protein localises to the nucleus membrane. The protein resides in the cytoplasm. It localises to the cytoskeleton. Its subcellular location is the spindle. It is found in the chromosome. The protein localises to the nucleus matrix. Plays a role in nuclear pore complex (NPC) assembly and maintenance. Required for nuclear import of Mad. Mediates the association between the nuclear pore complex and a subset of active chromatin regions adjacent to lamin-associated domains. Plays a role in double strand break repair by relocalizing the heterochromatic double strand breaks (DSBs) to the nuclear periphery as part of the homologous recombination (HR) repair process. Regulates cytokinesis during spermatocyte meiosis by maintaining type-B lamin Lam localization to the spindle envelope. Regulates female gonad development and oogenesis. The protein is Nuclear pore complex protein Nup107 of Drosophila melanogaster (Fruit fly).